The following is a 310-amino-acid chain: Glutamyl-Q tRNA(Asp) synthetase (310 aa).

L-glutamate is bound by residues 8–12 (RFAPS) and glutamate 44. A 'HIGH' region motif is present at residues 11 to 21 (PSPTGPLHLGS). Cysteine 100, cysteine 102, tyrosine 123, and cysteine 127 together coordinate Zn(2+). L-glutamate contacts are provided by tyrosine 183 and arginine 201. A 'KMSKS' region motif is present at residues 239-243 (KLSKQ). ATP is bound at residue lysine 242.

This sequence belongs to the class-I aminoacyl-tRNA synthetase family. GluQ subfamily. Zn(2+) is required as a cofactor.

In terms of biological role, catalyzes the tRNA-independent activation of glutamate in presence of ATP and the subsequent transfer of glutamate onto a tRNA(Asp). Glutamate is transferred on the 2-amino-5-(4,5-dihydroxy-2-cyclopenten-1-yl) moiety of the queuosine in the wobble position of the QUC anticodon. The chain is Glutamyl-Q tRNA(Asp) synthetase from Cupriavidus metallidurans (strain ATCC 43123 / DSM 2839 / NBRC 102507 / CH34) (Ralstonia metallidurans).